Reading from the N-terminus, the 257-residue chain is Reticulon-like protein B4 (257 aa).

A disordered region spans residues 19-42; it reads IHGHGDSSSLSDSDDDKKSTSSSS. The Reticulon domain occupies 68 to 257; it reads PADIFLWRNK…PRGALNKKKD (190 aa). Helical transmembrane passes span 78–98, 99–119, and 173–193; these read KVSG…ELFE, YHLL…LFLW, and FILV…YNFL.

In terms of assembly, interacts with VirB2.

It is found in the endoplasmic reticulum membrane. Its function is as follows. Plays a role in the Agrobacterium-mediated plant transformation via its interaction with VirB2, the major component of the T-pilus. This Arabidopsis thaliana (Mouse-ear cress) protein is Reticulon-like protein B4 (RTNLB4).